The primary structure comprises 89 residues: Histone H3.v2 (89 aa).

Belongs to the histone H3 family.

In Dictyostelium discoideum (Social amoeba), this protein is Histone H3.v2 (H3v2).